The chain runs to 458 residues: Protochlorophyllide reductase, chloroplastic (458 aa).

It belongs to the short-chain dehydrogenases/reductases (SDR) family. POR subfamily.

It is found in the plastid. It localises to the chloroplast. The catalysed reaction is chlorophyllide a + NADP(+) = protochlorophyllide a + NADPH + H(+). It participates in porphyrin-containing compound metabolism; chlorophyll biosynthesis. In terms of biological role, phototransformation of protochlorophyllide (Pchlide) to chlorophyllide (Chlide). The sequence is that of Protochlorophyllide reductase, chloroplastic (PORA) from Marchantia paleacea (Liverwort).